The following is a 647-amino-acid chain: MPKIIELPEVLANQIAAGEVVERPASVVKELVENAIDAGSTQITIEVEESGLSKIQITDNGEGMAQADVAMSLRRHATSKIKNQGDLFRIRTLGFRGEALPSIASISHLTIVTAADGEVYGTKLVAKGGEIESQDPISTPVGTKITVENLFYNTPARLKYMKSLQAELAHIVDVVNRLSLAHPEVAFTLLNDGRQLTQTSGTGDLRQAIAGIYGLTTAKKMVEISNSDLDFEVSGYVSLPELTRANRNYITILINGRYIKNFLLNRAIFDGYGSKLMVGRFPIAVIDIQIDPYLADVNVHPTKQEVRISKEKELMALIKSAIAQSLREQDLIPDALENLAKSSTRGATRSVQTSLPLKQTNLYYDSSRNDFFVTPETVQEDIKPLVSKSESSVSSVANKQQPTVKQAKRSADDSDSEHGKLDYKNKSKLKRMLENLTNEETSTFPELEFFGQMHGTYLFAQGQGGLYIIDQHAAQERVKYEYYREKIGVVDSSLQQLLVPYLFEFSGSDYISLQEKMPLLNQVCIYLEPYGNNTFILREHPIWMKEEEIESAVYEMCDMLLLTNEVSVKTYRAELAIMMSCKRSIKANHALDDYSARDLLVQLAQCKNPYNCPHGRPVLVNFTKSDMEKMFRRIQENHTSLRDLGKY.

A disordered region spans residues Ser-389–Tyr-423. Residues Arg-409–Tyr-423 are compositionally biased toward basic and acidic residues.

It belongs to the DNA mismatch repair MutL/HexB family.

Functionally, this protein is involved in the repair of mismatches in DNA. It is required for dam-dependent methyl-directed DNA mismatch repair. May act as a 'molecular matchmaker', a protein that promotes the formation of a stable complex between two or more DNA-binding proteins in an ATP-dependent manner without itself being part of a final effector complex. The chain is DNA mismatch repair protein MutL from Streptococcus thermophilus (strain ATCC BAA-491 / LMD-9).